A 1170-amino-acid polypeptide reads, in one-letter code: WD repeat-containing protein 35 (1170 aa).

5 WD repeats span residues 12-51, 69-108, 113-152, 154-193, and 491-528; these read PNNV…DDSK, GHSG…WYEE, RNKS…IWGK, LKGI…IMKM, and GTRD…LIQK.

In terms of assembly, component of the IFT complex A (IFT-A) complex. IFT-A complex is divided into a core subcomplex composed of IFT122:IFT140:WDR19 which is associated with TULP3 and a peripheral subcomplex composed of IFT43:WDR35:TTC21B. Interacts directy with IFT122, ITF43 and TTC21B. Interacts with IFT43. Interacts with CFAP61. As to expression, expressed at high levels in testis and at lower levels in the brain (at protein level). Also present in other tissues, including heart, uterus, spinal cord, ovary, liver, kidney, lung, pancreas and stomach.

It localises to the cytoplasm. Its subcellular location is the cytoskeleton. It is found in the microtubule organizing center. The protein localises to the centrosome. The protein resides in the cilium axoneme. It localises to the cilium basal body. Functionally, as a component of the IFT complex A (IFT-A), a complex required for retrograde ciliary transport and entry into cilia of G protein-coupled receptors (GPCRs), it is involved in ciliogenesis and ciliary protein trafficking. May promote CASP3 activation and TNF-stimulated apoptosis. This chain is WD repeat-containing protein 35 (Wdr35), found in Rattus norvegicus (Rat).